The primary structure comprises 762 residues: 5-methyltetrahydropteroyltriglutamate--homocysteine methyltransferase (762 aa).

5-methyltetrahydropteroyltri-L-glutamate-binding positions include 16 to 19 (RELK) and Lys117. Residues 438–440 (IGS) and Glu491 contribute to the L-homocysteine site. L-methionine-binding positions include 438 to 440 (IGS) and Glu491. 5-methyltetrahydropteroyltri-L-glutamate contacts are provided by residues 522–523 (RC) and Trp568. Asp606 is a binding site for L-homocysteine. Asp606 is an L-methionine binding site. Position 612 (Glu612) interacts with 5-methyltetrahydropteroyltri-L-glutamate. Residues His648, Cys650, and Glu672 each coordinate Zn(2+). The active-site Proton donor is the His701. Residue Cys733 coordinates Zn(2+).

The protein belongs to the vitamin-B12 independent methionine synthase family. It depends on Zn(2+) as a cofactor.

It catalyses the reaction 5-methyltetrahydropteroyltri-L-glutamate + L-homocysteine = tetrahydropteroyltri-L-glutamate + L-methionine. Its pathway is amino-acid biosynthesis; L-methionine biosynthesis via de novo pathway; L-methionine from L-homocysteine (MetE route): step 1/1. In terms of biological role, catalyzes the transfer of a methyl group from 5-methyltetrahydrofolate to homocysteine resulting in methionine formation. This chain is 5-methyltetrahydropteroyltriglutamate--homocysteine methyltransferase, found in Pseudomonas fluorescens (strain ATCC BAA-477 / NRRL B-23932 / Pf-5).